A 239-amino-acid chain; its full sequence is ATP-dependent dethiobiotin synthetase BioD (239 aa).

ATP is bound at residue 15–20 (EIGKTF). Thr19 contributes to the Mg(2+) binding site. Residue Lys40 is part of the active site. Residues Asp57, 118 to 121 (EGAG), and 178 to 179 (NH) contribute to the ATP site. Asp57 and Glu118 together coordinate Mg(2+).

This sequence belongs to the dethiobiotin synthetase family. Homodimer. The cofactor is Mg(2+).

Its subcellular location is the cytoplasm. It carries out the reaction (7R,8S)-7,8-diammoniononanoate + CO2 + ATP = (4R,5S)-dethiobiotin + ADP + phosphate + 3 H(+). It participates in cofactor biosynthesis; biotin biosynthesis; biotin from 7,8-diaminononanoate: step 1/2. Its function is as follows. Catalyzes a mechanistically unusual reaction, the ATP-dependent insertion of CO2 between the N7 and N8 nitrogen atoms of 7,8-diaminopelargonic acid (DAPA, also called 7,8-diammoniononanoate) to form a ureido ring. This is ATP-dependent dethiobiotin synthetase BioD from Burkholderia lata (strain ATCC 17760 / DSM 23089 / LMG 22485 / NCIMB 9086 / R18194 / 383).